The primary structure comprises 388 residues: MFELTDAQRQLQQSARRLALEAIAPHAAQTDRSEQYPWHTVEALREQRLMGMTLPPEYGGKGASYFDTVLVIEELSKVCAASGRIMVESNMGAIGAIMKYGSDAQKQLAARLVLAGDKPAICITEPQAGSAASDMQTRAERRGDTWHLSGCKHWITGGGVSKLHFVFARAIEDGKDTGIAGFIVVGPDVPGMTIQRIPAMGIRGVPEARIEFDDMRVRHDMKVTPPGRTEAGFAGLMNAYNAQRVGAATVALGIAQGAFDLALDYAKRREQFGRPIAEFQGLQWMLADMSIQLEAARLMVWKAAASGSEFPSMFAAAQAKIAAGEAAIKVTNDALQIHGAVGYGRDLPLERMVRDARMFTISGGTAQILRTQVAGTLLGQKLSQRRSA.

FAD contacts are provided by residues 121–124 (ICIT), S130, and 153–156 (HWIT). Residue 240–241 (YN) coordinates substrate. FAD is bound by residues R269, Q336, 363–367 (GGTAQ), and Q384.

Belongs to the acyl-CoA dehydrogenase family. Homotrimer or homotetramer. FAD serves as cofactor.

It catalyses the reaction 3-sulfinopropanoyl-CoA + H2O = propanoyl-CoA + sulfite + H(+). Its function is as follows. Catalyzes the conversion 3-sulfinopropanoyl-CoA (3SP-CoA) to propanoyl-CoA by abstraction of sulfite. Does not show dehydrogenase activity. The polypeptide is 3-sulfinopropanoyl-CoA desulfinase (Paraburkholderia xenovorans (strain LB400)).